We begin with the raw amino-acid sequence, 444 residues long: MEAADPNNNLTITSPSTLLSNPTQPPAQPLKLRDSCHACASSKVKCHKEKPTCSRCRKRGITCEYFAHRRPGRKQENRAKDTTNHVERQENTTAVEMLDLNWPAPDFSTQTSIANDNLDVFHDIFVPPDQLNNGLTDFTIDFDDFDIQSDPAEIASLPDTSSLESMFVTSPTAPTDTITPNVITPNVGLSVLEGLPDTTHHTQAINLASYIQTPPTEKTPDSRIKHLEENKDPCMTRALSFLTQLSESTSRICKTSETGCSGTNKKSLPESLDGIIAENRRLLEAMSNILQCRCSEDDDLLCIQAIVASKILNLYASAIEIKPSPARVGSGVSTHTTAGQYEPQVEQQLSTRTHPQLASGRDPIRMAAQSVLGELHRVQRLLSQMLQKSKDNETMRRKGSENGLRAVADKVPLTSGVSFGSIEADLRYKLGKLSIEIITLLRGA.

Polar residues predominate over residues Met-1–Pro-22. The segment at Met-1–Lys-31 is disordered. The zn(2)-C6 fungal-type DNA-binding region spans Cys-36 to Cys-63. Residues Ala-326–Gln-348 form a disordered region. Polar residues predominate over residues Gly-331 to Gln-348.

The protein localises to the nucleus. Functionally, transcription factor that, with ptaR1 and ptaR3, coregulates the expression of the gene cluster that mediates the biosynthesis of pestheic acid, a diphenyl ether which is a biosynthetic precursor of the unique chloropupukeananes. In Pestalotiopsis fici (strain W106-1 / CGMCC3.15140), this protein is Pestheic acid cluster transcriptional regulator 2.